The sequence spans 383 residues: Heme A synthase (383 aa).

Helical transmembrane passes span 38–58 (VRVWLMMLFGLVVIMIAVGGL), 127–147 (VIGLVWALGFFGFLVTRKIPP), 153–173 (LFLLGVLGGLQGAIGWWMVAS), 187–207 (LATHLGLAFFILGLIAWYIMV), 230–250 (ANWLMGLAAVQILLGALVAGI), 287–307 (LVQFNHRMVGYLLLLVGLYVW), 321–341 (AFDWVAVILFGQMVLGIVTVL), and 344–364 (APWTWAIAHQFGAVVTICLIL). Heme is bound at residue H292. H352 is a heme binding site.

The protein belongs to the COX15/CtaA family. Type 2 subfamily. In terms of assembly, interacts with CtaB. Heme b is required as a cofactor.

It is found in the cell membrane. It carries out the reaction Fe(II)-heme o + 2 A + H2O = Fe(II)-heme a + 2 AH2. Its pathway is porphyrin-containing compound metabolism; heme A biosynthesis; heme A from heme O: step 1/1. Functionally, catalyzes the conversion of heme O to heme A by two successive hydroxylations of the methyl group at C8. The first hydroxylation forms heme I, the second hydroxylation results in an unstable dihydroxymethyl group, which spontaneously dehydrates, resulting in the formyl group of heme A. The chain is Heme A synthase from Dinoroseobacter shibae (strain DSM 16493 / NCIMB 14021 / DFL 12).